The primary structure comprises 114 residues: Nucleoid-associated protein Clos_2855 (114 aa).

The protein belongs to the YbaB/EbfC family. Homodimer.

It is found in the cytoplasm. The protein resides in the nucleoid. Its function is as follows. Binds to DNA and alters its conformation. May be involved in regulation of gene expression, nucleoid organization and DNA protection. In Alkaliphilus oremlandii (strain OhILAs) (Clostridium oremlandii (strain OhILAs)), this protein is Nucleoid-associated protein Clos_2855.